The chain runs to 481 residues: Thiol protease (481 aa).

Residues 169–481 (DLREQALSST…ENFWYIAYMY (313 aa)) form the Calpain catalytic domain. Catalysis depends on residues Cys-229, His-406, and Asn-426.

This sequence belongs to the peptidase C2 family.

Its activity is regulated as follows. Inactive below 20 degrees Celsius and pH 6.0. Inhibited by divalent cations. In terms of biological role, thiol protease. Probably an important virulence factor. The chain is Thiol protease (tpr) from Porphyromonas gingivalis (strain ATCC BAA-308 / W83).